Reading from the N-terminus, the 84-residue chain is Small ribosomal subunit protein uS17 (84 aa).

The protein belongs to the universal ribosomal protein uS17 family. Part of the 30S ribosomal subunit.

Its function is as follows. One of the primary rRNA binding proteins, it binds specifically to the 5'-end of 16S ribosomal RNA. The chain is Small ribosomal subunit protein uS17 from Photorhabdus laumondii subsp. laumondii (strain DSM 15139 / CIP 105565 / TT01) (Photorhabdus luminescens subsp. laumondii).